A 518-amino-acid polypeptide reads, in one-letter code: Centromere protein T (518 aa).

The disordered stretch occupies residues 1–70 (MADLSSPDGD…RKHSHGTGSV (70 aa)). Residues 19–28 (HVLDTADSHT) show a composition bias toward basic and acidic residues. Residues 34 to 57 (STQTNPQRRRSQTPYSKRQGSQRK) show a composition bias toward polar residues. Threonine 86 carries the post-translational modification Phosphothreonine. The segment at 94 to 381 (ILLTAPESST…EPHQLFEPPP (288 aa)) is flexible stalk domain. 3 disordered regions span residues 102-156 (STVM…KRKQ), 271-362 (VHHS…ELSS), and 375-412 (QLFE…HQDP). Residues 294 to 306 (TPSTGTRPQSQMS) show a composition bias toward polar residues. Phosphoserine is present on residues serine 313, serine 324, serine 333, serine 345, serine 346, serine 357, and serine 382. The segment covering 326–343 (ELREAVGSKEAEEPKDLE) has biased composition (basic and acidic residues). Over residues 384 to 395 (GVAAVSSESVPA) the composition is skewed to low complexity.

This sequence belongs to the CENP-T/CNN1 family. Component of the CENPA-CAD complex, composed of CENPI, CENPK, CENPL, CENPO, CENPP, CENPQ, CENPR and CENPS. The CENPA-CAD complex is probably recruited on centromeres by the CENPA-NAC complex, at least composed of CENPA, CENPC, CENPH, CENPM, CENPN, CENPT and CENPU. Identified in a centromeric complex containing histones H2A, H2B, H3 and H4, and at least CENPA, CENPB, CENPC, CENPT, CENPN, HJURP, SUPT16H, SSRP1 and RSF1. Interacts (via N-terminus) with the NDC80 complex. Heterodimer with CENPW; this dimer coassembles with CENPS-CENPX heterodimers at centromeres to form the tetrameric CENP-T-W-S-X complex. Dynamically phosphorylated during the cell cycle. Phosphorylated during G2 phase, metaphase and anaphase, but not during telophase or G1 phase.

The protein localises to the nucleus. It is found in the chromosome. Its subcellular location is the centromere. It localises to the kinetochore. Its function is as follows. Component of the CENPA-NAC (nucleosome-associated) complex, a complex that plays a central role in assembly of kinetochore proteins, mitotic progression and chromosome segregation. The CENPA-NAC complex recruits the CENPA-CAD (nucleosome distal) complex and may be involved in incorporation of newly synthesized CENPA into centromeres. Part of a nucleosome-associated complex that binds specifically to histone H3-containing nucleosomes at the centromere, as opposed to nucleosomes containing CENPA. Component of the heterotetrameric CENP-T-W-S-X complex that binds and supercoils DNA, and plays an important role in kinetochore assembly. CENPT has a fundamental role in kinetochore assembly and function. It is one of the inner kinetochore proteins, with most further proteins binding downstream. Required for normal chromosome organization and normal progress through mitosis. The chain is Centromere protein T (Cenpt) from Rattus norvegicus (Rat).